The primary structure comprises 405 residues: MPSAIPRGLLLLAGLCCLVFGIMAEDAQVAQGPSQQIPRSLAHFAHSMYRVLTQQSNTSNIFFSPVSIATALAMVSVGAKGDTHTQILRGLEFNLTEIAEADIHNGFQNLLHTLNRPHSEHQLTTGNGLFLDQKLKLKEKFSEDVKTLYHAEAFPTNFSNPKEAEKQINAYVEKGTQGKIVDLVKDLSADTVLALVNYIFFRGKWEKPFDVKHTTQEDFHVDTSTTVKVPMMKREGKYKAFHCSTIQSWVLLLDYEGNVTALFLLPEEGKMQHLEETLTPELIFKFARKTERMFANVHLPKLSISGTYDLKEVLGHLGITNVFSDAADLSGVTEDIPLKISKGLHKALLTIDEKGTEAAGATMMEFMPMSLPEDLSFNKPFLFLIIDHSTDTPLFVGKVMDPTKK.

The N-terminal stretch at 1-24 is a signal peptide; it reads MPSAIPRGLLLLAGLCCLVFGIMA. N-linked (GlcNAc...) asparagine glycosylation is found at Asn-57, Asn-94, Asn-157, and Asn-258. The interval 360–379 is RCL; the sequence is GATMMEFMPMSLPEDLSFNK.

Belongs to the serpin family.

The protein resides in the secreted. Inhibits elastase, chymotrypsin, cathepsin G, plasmin, and trypsin. This chain is Alpha-1-antiproteinase S, found in Cavia porcellus (Guinea pig).